We begin with the raw amino-acid sequence, 398 residues long: Acetate kinase 1 (398 aa).

Residue N9 coordinates Mg(2+). An ATP-binding site is contributed by K16. Residue R89 coordinates substrate. D146 serves as the catalytic Proton donor/acceptor. ATP contacts are provided by residues H206–G210, D281–R283, and G329–N333. Residue E384 participates in Mg(2+) binding.

The protein belongs to the acetokinase family. Homodimer. It depends on Mg(2+) as a cofactor. The cofactor is Mn(2+).

The protein resides in the cytoplasm. The enzyme catalyses acetate + ATP = acetyl phosphate + ADP. The protein operates within metabolic intermediate biosynthesis; acetyl-CoA biosynthesis; acetyl-CoA from acetate: step 1/2. Functionally, catalyzes the formation of acetyl phosphate from acetate and ATP. Can also catalyze the reverse reaction. The polypeptide is Acetate kinase 1 (Aliivibrio fischeri (strain ATCC 700601 / ES114) (Vibrio fischeri)).